Reading from the N-terminus, the 560-residue chain is DNA ligase B (560 aa).

Lysine 124 (N6-AMP-lysine intermediate) is an active-site residue.

The protein belongs to the NAD-dependent DNA ligase family. LigB subfamily.

It carries out the reaction NAD(+) + (deoxyribonucleotide)n-3'-hydroxyl + 5'-phospho-(deoxyribonucleotide)m = (deoxyribonucleotide)n+m + AMP + beta-nicotinamide D-nucleotide.. Functionally, catalyzes the formation of phosphodiester linkages between 5'-phosphoryl and 3'-hydroxyl groups in double-stranded DNA using NAD as a coenzyme and as the energy source for the reaction. The polypeptide is DNA ligase B (Escherichia coli O1:K1 / APEC).